The following is an 848-amino-acid chain: Paramyosin (848 aa).

Residues 1 to 9 (AFGSMSVAD) are nonhelical region. Residues 10-833 (LGSLTRLEDK…HLIRAKHRSS (824 aa)) are a coiled coil. Residues 834 to 848 (VVTGKNASASKIYVL) are nonhelical region.

The protein belongs to the paramyosin family. As to quaternary structure, homodimer.

It localises to the cytoplasm. The protein localises to the myofibril. Paramyosin is a major structural component of many thick filaments isolated from invertebrate muscles. The chain is Paramyosin from Dirofilaria immitis (Canine heartworm).